Consider the following 174-residue polypeptide: NADH-ubiquinone oxidoreductase chain 6 (174 aa).

The next 6 helical transmembrane spans lie at 1 to 21 (MTYVLFLLSVSLVMGFVGFSS), 24 to 44 (SPIYGGLVLIVSGVVGCTIIL), 47 to 67 (GGGYMGLMVFLIYLGGMMVVF), 86 to 106 (VEVLVSVLVGLAMEVGLVLWV), 111 to 131 (GVVVVVNFNSVGSWMIYEGEG), and 151 to 171 (WLVVVTGWTLFVGVYIVIEIA).

This sequence belongs to the complex I subunit 6 family. In terms of assembly, core subunit of respiratory chain NADH dehydrogenase (Complex I) which is composed of 45 different subunits.

The protein resides in the mitochondrion inner membrane. The enzyme catalyses a ubiquinone + NADH + 5 H(+)(in) = a ubiquinol + NAD(+) + 4 H(+)(out). Its function is as follows. Core subunit of the mitochondrial membrane respiratory chain NADH dehydrogenase (Complex I) which catalyzes electron transfer from NADH through the respiratory chain, using ubiquinone as an electron acceptor. Essential for the catalytic activity and assembly of complex I. The chain is NADH-ubiquinone oxidoreductase chain 6 (MT-ND6) from Pan paniscus (Pygmy chimpanzee).